A 329-amino-acid polypeptide reads, in one-letter code: DNA-directed RNA polymerase subunit alpha (329 aa).

Positions 1-235 are alpha N-terminal domain (alpha-NTD); that stretch reads MQGSVTEFLK…EQLEAFVDLR (235 aa). Residues 249–329 form an alpha C-terminal domain (alpha-CTD) region; the sequence is FDPILLRPVD…NWPPASIADE (81 aa).

It belongs to the RNA polymerase alpha chain family. Homodimer. The RNAP catalytic core consists of 2 alpha, 1 beta, 1 beta' and 1 omega subunit. When a sigma factor is associated with the core the holoenzyme is formed, which can initiate transcription.

The catalysed reaction is RNA(n) + a ribonucleoside 5'-triphosphate = RNA(n+1) + diphosphate. Its function is as follows. DNA-dependent RNA polymerase catalyzes the transcription of DNA into RNA using the four ribonucleoside triphosphates as substrates. The sequence is that of DNA-directed RNA polymerase subunit alpha from Photorhabdus laumondii subsp. laumondii (strain DSM 15139 / CIP 105565 / TT01) (Photorhabdus luminescens subsp. laumondii).